Here is an 862-residue protein sequence, read N- to C-terminus: Leucine--tRNA ligase (862 aa).

Positions 51–61 (PYPSGSLHMGH) match the 'HIGH' region motif. The 'KMSKS' region signature appears at 624-628 (KMSKS). Lysine 627 serves as a coordination point for ATP.

It belongs to the class-I aminoacyl-tRNA synthetase family.

It localises to the cytoplasm. The catalysed reaction is tRNA(Leu) + L-leucine + ATP = L-leucyl-tRNA(Leu) + AMP + diphosphate. This is Leucine--tRNA ligase from Prochlorococcus marinus (strain NATL2A).